The primary structure comprises 336 residues: GTPase Obg (336 aa).

The region spanning 1 to 159 (MKFLDETKVY…KTIWLRLKLI (159 aa)) is the Obg domain. Residues 160 to 327 (ADAGLVGLPN…TLRALRSVID (168 aa)) form the OBG-type G domain. Residues 166–173 (GLPNAGKS), 191–195 (FTTLH), 212–215 (DIPG), 279–282 (SQID), and 308–310 (SAV) contribute to the GTP site. The Mg(2+) site is built by Ser-173 and Thr-193.

The protein belongs to the TRAFAC class OBG-HflX-like GTPase superfamily. OBG GTPase family. As to quaternary structure, monomer. The cofactor is Mg(2+).

The protein resides in the cytoplasm. In terms of biological role, an essential GTPase which binds GTP, GDP and possibly (p)ppGpp with moderate affinity, with high nucleotide exchange rates and a fairly low GTP hydrolysis rate. Plays a role in control of the cell cycle, stress response, ribosome biogenesis and in those bacteria that undergo differentiation, in morphogenesis control. This Sinorhizobium medicae (strain WSM419) (Ensifer medicae) protein is GTPase Obg.